A 521-amino-acid polypeptide reads, in one-letter code: DNA damage-binding protein cmr1 (521 aa).

The tract at residues 36-75 is disordered; sequence DKIIPKPAPPKPKRASTPRVKREPVKKEAARPTRQSSRLA. Over residues 55 to 66 the composition is skewed to basic and acidic residues; that stretch reads VKREPVKKEAAR. WD repeat units lie at residues 183–224, 242–282, 333–373, 382–422, and 490–521; these read IVPQ…PKIE, THSR…STEI, LTDH…GKGD, EHES…EWKA, and DGIT…CLWM.

This sequence belongs to the WD repeat DDB2/WDR76 family.

Its function is as follows. DNA-binding protein that binds to both single- and double-stranded DNA. Binds preferentially to UV-damaged DNA. May be involved in DNA-metabolic processes. The protein is DNA damage-binding protein cmr1 of Neurospora crassa (strain ATCC 24698 / 74-OR23-1A / CBS 708.71 / DSM 1257 / FGSC 987).